The chain runs to 279 residues: RRP15-like protein (279 aa).

Disordered regions lie at residues 1 to 40 (MALL…GANA), 56 to 120 (GPTV…TERR), and 200 to 279 (KSTA…DEED). The segment covering 73-83 (KTSEAAKKPGF) has biased composition (basic and acidic residues). Composition is skewed to acidic residues over residues 93–104 (KEEDDDDEEDGD) and 213–224 (QETDDDDEDDTA). The span at 232-245 (KKSEWNVLREDFMT) shows a compositional bias: basic and acidic residues. Positions 267 to 279 (DEADDSDDDDEED) are enriched in acidic residues.

The protein belongs to the RRP15 family.

This Drosophila pseudoobscura pseudoobscura (Fruit fly) protein is RRP15-like protein.